The following is a 979-amino-acid chain: Receptor-type tyrosine-protein phosphatase-like N (979 aa).

The N-terminal stretch at 1–34 (MRRPRRPGGLGGSGGLRLLLCLLLLSSRPGGCSA) is a signal peptide. The interval 35-131 (VSAHGCLFDR…RPRDRSGLAP (97 aa)) is RESP18 homology domain. Residues 35–575 (VSAHGCLFDR…QTAHSTSPMR (541 aa)) are Lumenal-facing. Cysteine 53 and cysteine 62 are disulfide-bonded. Basic and acidic residues-rich tracts occupy residues 112-127 (RIPR…RDRS) and 304-323 (RAED…RGEK). Disordered regions lie at residues 112 to 173 (RIPR…SSSL), 289 to 329 (SRAR…SPAV), and 393 to 439 (VEGR…ARPP). Position 308 is a phosphoserine (serine 308). Residues 415–433 (SPTSSEVQQVPSPVSSEPP) show a composition bias toward low complexity. Threonine 441 carries O-linked (GalNAc...) threonine glycosylation. The sufficient for dimerization of proICA512 stretch occupies residues 449-575 (SPLGQSQPTV…QTAHSTSPMR (127 aa)). N-linked (GlcNAc...) asparagine glycans are attached at residues asparagine 506 and asparagine 524. Residues 576–600 (SVLLTLVALAGVAGLLVALAVALCV) traverse the membrane as a helical segment. Positions 601 to 732 (RQHARQQDKE…PNTCATAQGE (132 aa)) are sufficient for dimerization of proICA512. Over 601–979 (RQHARQQDKE…VNAILKALPQ (379 aa)) the chain is Cytoplasmic. A disordered region spans residues 643–680 (NRAEGPPEPSRVSSVSSQFSDAAQASPSSHSSTPSWCE). The segment covering 652-677 (SRVSSVSSQFSDAAQASPSSHSSTPS) has biased composition (low complexity). The Tyrosine-protein phosphatase domain occupies 709–969 (LAKEWQALCA…EFALTAVAEE (261 aa)). A Glycyl lysine isopeptide (Lys-Gly) (interchain with G-Cter in SUMO) cross-link involves residue lysine 754.

This sequence belongs to the protein-tyrosine phosphatase family. Receptor class 8 subfamily. As to quaternary structure, homodimer; shown for the unprocessed protein (proICA512) in the endoplasmic reticulum and resolved during protein maturation as ICA512-TMF seems to be predominantly monomeric in secretory granules; however, ICA512-CCF interacts with ICA512-TMF disrupting the ICA512-TMF:SNTB2 complex. The isolated lumenal RESP18 homology domain has been shown to form disulfide-linked homooligomers. Interacts (via cytoplasmic domain) with phosphorylated SNTB2; this protects PTPRN against cleavage by CAPN1 to produce ICA512-CCF. Dephosphorylation of SNTB2 upon insulin stimulation disrupts the interaction and results in PTPRN cleavage. Interacts with SNX19. ICA512-CCF interacts with PIAS4; in the nucleus. Interacts with STAT5B (phosphorylated); down-regulated by ICA512-CCF sumoylation; ICA512-CCF prevents STAT5B dephosphorylation; ICA512-CCF mediates interaction of STAT5B with PIAS4. Interacts (via RESP18 homology domain) with insulin and proinsulin. Interacts with PTPRN2, PTPRA and PTPRE. N-glycosylated. In terms of processing, O-glycosylated with core 1 or possibly core 8 glycans. Post-translationally, subject to proteolytic cleavage at multiple sites. Subject to cleavage on a pair of basic residues. On exocytosis of secretory granules in pancreatic beta-cells ICA512-TMF is transiently inserted in the plasma-membrane and cleaved by mu-type calpain CPN1 to yield ICA512-CCF. Sumoylated at two sites including Lys-754. Sumoylation decreases interaction with STAT5. In terms of tissue distribution, expression is restricted to neuroendocrine cells. Found in pancreas, brain and pituitary.

The protein localises to the membrane. Its subcellular location is the cytoplasmic vesicle. It localises to the secretory vesicle membrane. It is found in the perikaryon. The protein resides in the cell projection. The protein localises to the axon. Its subcellular location is the synapse. It localises to the cell membrane. It is found in the endosome. The protein resides in the nucleus. Functionally, plays a role in vesicle-mediated secretory processes. Required for normal accumulation of secretory vesicles in hippocampus, pituitary and pancreatic islets. Required for the accumulation of normal levels of insulin-containing vesicles and preventing their degradation. Plays a role in insulin secretion in response to glucose stimuli. Required for normal accumulation of the neurotransmitters norepinephrine, dopamine and serotonin in the brain. In females, but not in males, required for normal accumulation and secretion of pituitary hormones, such as luteinizing hormone (LH) and follicle-stimulating hormone (FSH). Required to maintain normal levels of renin expression and renin release. Seems to lack intrinsic enzyme activity. May regulate catalytic active protein-tyrosine phosphatases such as PTPRA through dimerization. Its function is as follows. ICA512-TMF regulates dynamics and exocytosis of insulin secretory granules (SGs); binding of ICA512-TMF to SNTB2/beta-2-syntrophin is proposed to restrain SGs mobility and exocytosis by tethering them to the actin cytoskeleton depending on UTRN; the function is inhibited by cytoplasmic ICA512-CFF dimerizing with ICA512-TMF and displacing SNTB2. ICA512-CCF translocated to the nucleus promotes expression of insulin and other granule-related genes; the function implicates binding to and regulating activity of STAT5B probably by preventing its dephosphorylation and potentially by inducing its sumoylation by recruiting PIAS4. Enhances pancreatic beta-cell proliferation by converging with signaling by STAT5B and STAT3. ICA512-CCF located in the cytoplasm regulates dynamics and exocytosis of insulin secretory granules (SGs) by dimerizing with ICA512-TMF and displacing SNTB2 thus enhancing SGs mobility and exocytosis. The protein is Receptor-type tyrosine-protein phosphatase-like N (PTPRN) of Homo sapiens (Human).